The following is a 76-amino-acid chain: Serine palmitoyltransferase small subunit B (76 aa).

The Cytoplasmic segment spans residues 1-11; the sequence is MDFKRVKEYFA. A helical membrane pass occupies residues 12-29; it reads WLYYQYQIITCCAVMEPW. Residues 30-36 are Lumenal-facing; it reads EQSMLNT. A helical membrane pass occupies residues 37 to 57; the sequence is IILTIVAMVVYTAYVFIPIHI. At 58-76 the chain is on the cytoplasmic side; sequence RLAWEFFSKICGYDSSISN.

This sequence belongs to the SPTSS family. SPTSSB subfamily. In terms of assembly, component of the serine palmitoyltransferase (SPT) complex, which is composed of SPTLC1, SPTLC2 or SPTLC3 and SPTSSA or SPTSSB. The heterodimer consisting of SPTLC1 and SPTLC2/SPTLC3 forms the catalytic core of the enzyme, while SPTSSA or SPTSSB subunits determine substrate specificity. SPT also interacts with ORMDL proteins, especially ORMDL3, which negatively regulate SPT activity in the presence of ceramides. Expression is strong in hypogonadal (hpg) mouse prostate, weak in mature castrated mouse prostate and absent in normal intact or androgen-replaced hpg mouse prostates.

The protein resides in the endoplasmic reticulum membrane. Its pathway is lipid metabolism; sphingolipid metabolism. Its function is as follows. Component of the serine palmitoyltransferase multisubunit enzyme (SPT) that catalyzes the initial and rate-limiting step in sphingolipid biosynthesis by condensing L-serine and activated acyl-CoA (most commonly palmitoyl-CoA) to form long-chain bases. The SPT complex is composed of SPTLC1, SPTLC2 or SPTLC3 and SPTSSA or SPTSSB. Within this complex, the heterodimer consisting of SPTLC1 and SPTLC2/SPTLC3 forms the catalytic core. Within the SPT complex, SPTSSB stimulates the catalytic activity and plays a role in substrate specificity. SPT complexes with this subunit showing a preference for longer acyl-CoAs. The SPTLC1-SPTLC2-SPTSSB complex shows a strong preference for C18-CoA substrate, while the SPTLC1-SPTLC3-SPTSSB isozyme displays an ability to use a broader range of acyl-CoAs, without apparent preference. The protein is Serine palmitoyltransferase small subunit B (Sptssb) of Mus musculus (Mouse).